The primary structure comprises 154 residues: Myoglobin (154 aa).

The Globin domain occupies 2-148 (GLSDGEWELV…FRNDIAAKYK (147 aa)). The residue at position 4 (S4) is a Phosphoserine. T68 is modified (phosphothreonine). H94 is a binding site for heme b.

It belongs to the globin family. In terms of assembly, monomeric.

It is found in the cytoplasm. It localises to the sarcoplasm. It catalyses the reaction Fe(III)-heme b-[protein] + nitric oxide + H2O = Fe(II)-heme b-[protein] + nitrite + 2 H(+). It carries out the reaction H2O2 + AH2 = A + 2 H2O. In terms of biological role, monomeric heme protein which primary function is to store oxygen and facilitate its diffusion within muscle tissues. Reversibly binds oxygen through a pentacoordinated heme iron and enables its timely and efficient release as needed during periods of heightened demand. Depending on the oxidative conditions of tissues and cells, and in addition to its ability to bind oxygen, it also has a nitrite reductase activity whereby it regulates the production of bioactive nitric oxide. Under stress conditions, like hypoxia and anoxia, it also protects cells against reactive oxygen species thanks to its pseudoperoxidase activity. This chain is Myoglobin (MB), found in Loxodonta africana (African elephant).